Reading from the N-terminus, the 195-residue chain is ATP-dependent Clp protease proteolytic subunit (195 aa).

Serine 97 acts as the Nucleophile in catalysis. Residue histidine 122 is part of the active site.

The protein belongs to the peptidase S14 family. As to quaternary structure, fourteen ClpP subunits assemble into 2 heptameric rings which stack back to back to give a disk-like structure with a central cavity, resembling the structure of eukaryotic proteasomes.

It localises to the cytoplasm. It carries out the reaction Hydrolysis of proteins to small peptides in the presence of ATP and magnesium. alpha-casein is the usual test substrate. In the absence of ATP, only oligopeptides shorter than five residues are hydrolyzed (such as succinyl-Leu-Tyr-|-NHMec, and Leu-Tyr-Leu-|-Tyr-Trp, in which cleavage of the -Tyr-|-Leu- and -Tyr-|-Trp bonds also occurs).. In terms of biological role, cleaves peptides in various proteins in a process that requires ATP hydrolysis. Has a chymotrypsin-like activity. Plays a major role in the degradation of misfolded proteins. This is ATP-dependent Clp protease proteolytic subunit from Campylobacter hominis (strain ATCC BAA-381 / DSM 21671 / CCUG 45161 / LMG 19568 / NCTC 13146 / CH001A).